Consider the following 165-residue polypeptide: Small ribosomal subunit protein uS17m (165 aa).

The protein belongs to the universal ribosomal protein uS17 family. Component of the mitochondrial small ribosomal subunit (mt-SSU). Mature N.crassa 74S mitochondrial ribosomes consist of a small (37S) and a large (54S) subunit. The 37S small subunit contains a 16S ribosomal RNA (16S mt-rRNA) and 32 different proteins. The 54S large subunit contains a 23S rRNA (23S mt-rRNA) and 42 different proteins. uS17m interacts with the F(1)-ATPase inhibitor IF(1) dimer.

Its subcellular location is the mitochondrion. Component of the mitochondrial ribosome (mitoribosome), a dedicated translation machinery responsible for the synthesis of mitochondrial genome-encoded proteins, including at least some of the essential transmembrane subunits of the mitochondrial respiratory chain. The mitoribosomes are attached to the mitochondrial inner membrane and translation products are cotranslationally integrated into the membrane. The sequence is that of Small ribosomal subunit protein uS17m (mrps17) from Neurospora crassa (strain ATCC 24698 / 74-OR23-1A / CBS 708.71 / DSM 1257 / FGSC 987).